The primary structure comprises 278 residues: Fasciclin-like arabinogalactan protein 5 (278 aa).

Positions 1 to 24 are cleaved as a signal peptide; that stretch reads MGLKASLSLLSLTILLVFSKVVTA. Positions 25 to 169 constitute an FAS1 domain; the sequence is NNITLAFQKY…LSIIQITMPI (145 aa). Residues N26, N74, N126, and N159 are each glycosylated (N-linked (GlcNAc...) asparagine). Residues 199–257 are disordered; the sequence is VVPAPGPAADDNSPDSAVPKTPPAPATDTPEADSPAPAPSADNEKIEAADKAKPSSSAS. Over residues 224–239 the composition is skewed to low complexity; sequence ATDTPEADSPAPAPSA. Residues 240 to 251 show a composition bias toward basic and acidic residues; that stretch reads DNEKIEAADKAK. S255 is lipidated: GPI-anchor amidated serine. Residues 256–278 constitute a propeptide, removed in mature form; that stretch reads ASKAGWSFDVILLLAFLASFAGF.

Belongs to the fasciclin-like AGP family.

The protein localises to the cell membrane. May be a cell surface adhesion protein. This is Fasciclin-like arabinogalactan protein 5 (FLA5) from Arabidopsis thaliana (Mouse-ear cress).